We begin with the raw amino-acid sequence, 412 residues long: uncharacterized protein (412 aa).

Residue His49 coordinates Zn(2+). The active-site Proton acceptor is the Glu52. His53 and Glu129 together coordinate Zn(2+).

Belongs to the peptidase M16 family. Requires Zn(2+) as cofactor.

This is an uncharacterized protein from Rickettsia felis (strain ATCC VR-1525 / URRWXCal2) (Rickettsia azadi).